A 447-amino-acid chain; its full sequence is Argininosuccinate synthase (447 aa).

ATP is bound by residues 17-25 (AFSGGLDTS) and Ala-43. Tyr-99 contacts L-citrulline. ATP contacts are provided by Gly-129 and Thr-131. L-aspartate contacts are provided by Thr-131, Asn-135, and Asp-136. Asn-135 is an L-citrulline binding site. Asp-136 lines the ATP pocket. L-citrulline-binding residues include Arg-139 and Ser-192. Residue Asp-194 participates in ATP binding. Residues Thr-201, Glu-203, and Glu-280 each coordinate L-citrulline.

Belongs to the argininosuccinate synthase family. Type 2 subfamily. In terms of assembly, homotetramer.

It is found in the cytoplasm. The catalysed reaction is L-citrulline + L-aspartate + ATP = 2-(N(omega)-L-arginino)succinate + AMP + diphosphate + H(+). It functions in the pathway amino-acid biosynthesis; L-arginine biosynthesis; L-arginine from L-ornithine and carbamoyl phosphate: step 2/3. The protein is Argininosuccinate synthase of Salmonella heidelberg (strain SL476).